The primary structure comprises 366 residues: Alanine racemase (366 aa).

Residue K33 is the Proton acceptor; specific for D-alanine of the active site. An N6-(pyridoxal phosphate)lysine modification is found at K33. A substrate-binding site is contributed by R129. Catalysis depends on Y253, which acts as the Proton acceptor; specific for L-alanine. M301 is a binding site for substrate.

The protein belongs to the alanine racemase family. Requires pyridoxal 5'-phosphate as cofactor.

It carries out the reaction L-alanine = D-alanine. It functions in the pathway amino-acid biosynthesis; D-alanine biosynthesis; D-alanine from L-alanine: step 1/1. In terms of biological role, catalyzes the interconversion of L-alanine and D-alanine. May also act on other amino acids. In Xanthomonas oryzae pv. oryzae (strain MAFF 311018), this protein is Alanine racemase (alr).